The chain runs to 428 residues: Adenylosuccinate synthetase (428 aa).

GTP is bound by residues 13–19 and 41–43; these read GDEGKGK and GHT. The Proton acceptor role is filled by Asp-14. Positions 14 and 41 each coordinate Mg(2+). Residues 14–17, 39–42, Thr-130, Arg-144, Gln-223, Thr-238, and Arg-302 contribute to the IMP site; these read DEGK and NAGH. The active-site Proton donor is His-42. 298 to 304 is a substrate binding site; sequence ASTGRRR. GTP is bound by residues Arg-304, 330 to 332, and 412 to 414; these read KLD and STG.

Belongs to the adenylosuccinate synthetase family. As to quaternary structure, homodimer. Requires Mg(2+) as cofactor.

The protein localises to the cytoplasm. It catalyses the reaction IMP + L-aspartate + GTP = N(6)-(1,2-dicarboxyethyl)-AMP + GDP + phosphate + 2 H(+). Its pathway is purine metabolism; AMP biosynthesis via de novo pathway; AMP from IMP: step 1/2. Plays an important role in the de novo pathway of purine nucleotide biosynthesis. Catalyzes the first committed step in the biosynthesis of AMP from IMP. In Dichelobacter nodosus (strain VCS1703A), this protein is Adenylosuccinate synthetase.